The sequence spans 320 residues: Malate dehydrogenase (320 aa).

NAD(+)-binding positions include 10-15 and Asp-34; that span reads GSGMIG. Substrate contacts are provided by Arg-83 and Arg-89. Residues Asn-96 and 119-121 contribute to the NAD(+) site; that span reads ITN. Positions 121 and 152 each coordinate substrate. The Proton acceptor role is filled by His-176.

It belongs to the LDH/MDH superfamily. MDH type 3 family.

It catalyses the reaction (S)-malate + NAD(+) = oxaloacetate + NADH + H(+). Catalyzes the reversible oxidation of malate to oxaloacetate. This chain is Malate dehydrogenase, found in Rhizobium meliloti (strain 1021) (Ensifer meliloti).